The primary structure comprises 417 residues: Carboxypeptidase A2 (417 aa).

Positions 1–16 (MRLTLLLAALLGYIYC) are cleaved as a signal peptide. The propeptide at 17 to 112 (QETFVGDQVL…EMLFNQQRER (96 aa)) is activation peptide. In terms of domain architecture, Peptidase M14 spans 120 to 412 (AYHTLEEIYQ…LGLKTIMEHV (293 aa)). Positions 177 and 180 each coordinate Zn(2+). Substrate-binding positions include 177–180 (HARE), R235, and 252–253 (NR). A disulfide bridge links C246 with C269. A Zn(2+)-binding site is contributed by H304. Position 305 to 306 (305 to 306 (SY)) interacts with substrate. C318 and C352 are joined by a disulfide. Y356 is a binding site for substrate. The active-site Proton donor/acceptor is the E378.

The protein belongs to the peptidase M14 family. Zn(2+) is required as a cofactor.

It localises to the secreted. It catalyses the reaction Similar to that of carboxypeptidase A (EC 3.4.17.1), but with a preference for bulkier C-terminal residues.. Its function is as follows. Carboxypeptidase that catalyzes the release of a C-terminal amino acid, with a preference for large aromatic C-terminal residues. This chain is Carboxypeptidase A2 (Cpa2), found in Rattus norvegicus (Rat).